Consider the following 160-residue polypeptide: Ureidoglycolate lyase (160 aa).

The protein belongs to the ureidoglycolate lyase family. In terms of assembly, homodimer. Requires Ni(2+) as cofactor.

The catalysed reaction is (S)-ureidoglycolate = urea + glyoxylate. It functions in the pathway nitrogen metabolism; (S)-allantoin degradation. In terms of biological role, catalyzes the catabolism of the allantoin degradation intermediate (S)-ureidoglycolate, generating urea and glyoxylate. Involved in the anaerobic utilization of allantoin as sole nitrogen source. Reinforces the induction of genes involved in the degradation of allantoin and glyoxylate by producing glyoxylate. The protein is Ureidoglycolate lyase of Shigella flexneri serotype 5b (strain 8401).